A 587-amino-acid chain; its full sequence is Solute carrier family 13 member 2 (587 aa).

4 helical membrane passes run 13–33 (FYLIVLCLPIFLLPLPLIVQT), 53–73 (ALPLAVTALFPIVLFPLMGIM), 86–106 (TNILFVGGLMVAIAVEHWNLH), and 136–156 (SMWISNTATTAMMVPIGHAVL). The tract at residues 188–208 (KLDNGQPVSAPSEPRTQKTQE) is disordered. 8 helical membrane passes run 264-284 (FAFPTMIILLLLAWLWLQVLF), 329-349 (VLFVLLVVLWFTREPGFFPGW), 367-387 (TVAIFISLVMFIIPSKIPGLM), 407-427 (TVNDKMPWNIVILLGGGFALA), 445-465 (PLQHIPPSATAVILCLLIAIF), 477-497 (LFLPILASMAQAICLHPLYVM), 506-526 (LAFMLPVATPPNAIVFSFGGL), and 535-555 (GFLLNIIGVLAITLSINSWSI).

The protein belongs to the SLC13A/DASS transporter (TC 2.A.47) family. NADC subfamily. In terms of tissue distribution, expressed in large and small intestine and in the kidney proximal tubules.

It is found in the apical cell membrane. It catalyses the reaction succinate(out) + 3 Na(+)(out) = succinate(in) + 3 Na(+)(in). The enzyme catalyses fumarate(out) + 3 Na(+)(out) = fumarate(in) + 3 Na(+)(in). The catalysed reaction is 2-oxoglutarate(out) + 3 Na(+)(out) = 2-oxoglutarate(in) + 3 Na(+)(in). Li(+) decreases succinate transport in the presence of Na(+), by competing at one of the three cation binding sites. Its function is as follows. Low-affinity sodium-dicarboxylate cotransporter, that mediates the entry of citric acid cycle intermediates, such as succinate, citrate, fumarate and alpha-ketoglutarate (2-oxoglutarate) into the small intestine and renal proximal tubule. Transports the dicarboxylate into the cell with a probable stoichiometry of 3 Na(+) for 1 divalent dicarboxylate, rendering the process electrogenic. Citrate is transported in protonated form as a divalent anion, rather than the trivalent form which is normally found in blood. Has a critical role in renal dicarboxylate transport. This is Solute carrier family 13 member 2 (Slc13a2) from Rattus norvegicus (Rat).